A 3027-amino-acid polypeptide reads, in one-letter code: DmX-like protein 1 (3027 aa).

WD repeat units lie at residues 108 to 145 (FLES…KPTE), 166 to 206 (KTAS…RTAV), and 229 to 277 (AHPR…NDCL). A phosphoserine mark is found at serine 324, serine 422, serine 425, and serine 436. Residues 420-433 (PSSEASVEDSNQAD) show a composition bias toward polar residues. Residues 420–450 (PSSEASVEDSNQADVKSDEETDDGVDDLKIN) form a disordered region. The stretch at 476-516 (DHQIEVLLSEWSKNADMLFSIHPMDGSLLVWHVDWLDEYQP) is one WD 4 repeat. The tract at residues 563-584 (KQKPSGLTRSTSMLISSGHNKS) is disordered. Serine 574 carries the post-translational modification Phosphoserine. WD repeat units follow at residues 580–621 (GHNK…ESAF), 628–665 (SHKS…RTPD), and 848–895 (GKDS…IPVS). Phosphoserine is present on residues serine 918 and serine 924. WD repeat units follow at residues 968–1010 (PSAG…GESA), 1134–1175 (SNTK…VQDQ), and 1211–1251 (GSPP…EPVI). Residues serine 1830, serine 1896, serine 1908, and serine 1970 each carry the phosphoserine modification. Disordered regions lie at residues 2367–2412 (PSKE…SSAP) and 2446–2468 (SRAE…DDDD). The segment covering 2451–2468 (DSEESLGSDDDDNDDDDD) has biased composition (acidic residues). WD repeat units lie at residues 2742 to 2783 (KAIN…TCFR), 2785 to 2824 (GGNS…CPVT), 2836 to 2878 (CHNK…ANSL), 2884 to 2923 (CHDS…QRQL), 2926 to 2965 (SHDS…LLHT), and 2978 to 3016 (NIGT…SPLN).

Expressed in bone, breast, eye, foreskin, heart, parathyroid, small intestine, testis, tonsils, placenta and uterus.

This chain is DmX-like protein 1 (DMXL1), found in Homo sapiens (Human).